Reading from the N-terminus, the 417-residue chain is UDP-N-acetylglucosamine 1-carboxyvinyltransferase (417 aa).

22-23 contributes to the phosphoenolpyruvate binding site; the sequence is KN. R92 contributes to the UDP-N-acetyl-alpha-D-glucosamine binding site. C116 (proton donor) is an active-site residue. C116 bears the 2-(S-cysteinyl)pyruvic acid O-phosphothioketal mark. Residues D304 and I326 each coordinate UDP-N-acetyl-alpha-D-glucosamine.

The protein belongs to the EPSP synthase family. MurA subfamily.

It is found in the cytoplasm. The enzyme catalyses phosphoenolpyruvate + UDP-N-acetyl-alpha-D-glucosamine = UDP-N-acetyl-3-O-(1-carboxyvinyl)-alpha-D-glucosamine + phosphate. Its pathway is cell wall biogenesis; peptidoglycan biosynthesis. In terms of biological role, cell wall formation. Adds enolpyruvyl to UDP-N-acetylglucosamine. The chain is UDP-N-acetylglucosamine 1-carboxyvinyltransferase from Geobacter sulfurreducens (strain ATCC 51573 / DSM 12127 / PCA).